Here is a 455-residue protein sequence, read N- to C-terminus: N(6)-adenosine-methyltransferase non-catalytic subunit METTL14 (455 aa).

The segment at 21-96 (QQLGAESPDS…QHQEESGPYE (76 aa)) is disordered. Residues 37–51 (SKDEQKEIEETRETC) show a composition bias toward basic and acidic residues. The span at 69–82 (EGEDPEEDVEEQKE) shows a compositional bias: acidic residues. 2 interaction with METTL3 regions span residues 134-135 (RD) and 236-237 (SG). The segment at 244–253 (RMCLRKWGFR) is positively charged region required for RNA-binding. Interaction with METTL3 stretches follow at residues 254-257 (RCED) and 277-286 (KAVFQRTKEH). The tract at residues 296 to 297 (RR) is positively charged region required for RNA-binding. Residues 307-311 (NVDID) are interaction with METTL3. The segment at 392-455 (ERLRPKSPPP…GGPHRGFPPR (64 aa)) is disordered. Residues 407-421 (RGGGAPRGGRGGPAA) are compositionally biased toward gly residues. The segment covering 423–441 (RGDRGRERNRPNFRGDRGG) has biased composition (basic and acidic residues).

This sequence belongs to the MT-A70-like family. In terms of assembly, heterodimer; heterodimerizes with mettl3 to form an antiparallel heterodimer that constitutes an active methyltransferase. Component of the WMM complex, a N6-methyltransferase complex composed of a catalytic subcomplex, named MAC, and of an associated subcomplex, named MACOM. The MAC subcomplex is composed of mettl3 and mettl14.

Its subcellular location is the nucleus. Functionally, the METTL3-METTL14 heterodimer forms a N6-methyltransferase complex that methylates adenosine residues at the N(6) position of some mRNAs and regulates the circadian clock, differentiation of embryonic stem cells and cortical neurogenesis. In the heterodimer formed with mettl3, mettl14 constitutes the RNA-binding scaffold that recognizes the substrate rather than the catalytic core. N6-methyladenosine (m6A), which takes place at the 5'-[AG]GAC-3' consensus sites of some mRNAs, plays a role in mRNA stability and processing. This chain is N(6)-adenosine-methyltransferase non-catalytic subunit METTL14 (mettl14), found in Danio rerio (Zebrafish).